The primary structure comprises 328 residues: Ankyrin repeat domain-containing protein 2 (328 aa).

S36 carries the post-translational modification Phosphoserine. At S68 the chain carries Phosphoserine; by PKB/AKT2. The disordered stretch occupies residues 96-116 (RDALAAAQEPPPEPEEITGPV). 5 ANK repeats span residues 116-145 (VNEE…SADT), 149-178 (FRRT…TVDF), 182-211 (LDCT…DTNV), 215-244 (LLST…DINA), and 248-277 (EGDS…DMMA). Residues 297–328 (RHALEHPEPESEQNGLERPGSGRETPQPIPAQ) are disordered.

In terms of assembly, interacts with ID3; both proteins cooperate in myoblast differentiation. Interacts with TTN/titin. Interacts (via ANK repeats) with TCAP; the interaction is direct. Interacts with TJP1 (via PDZ domains). Interacts with PML; the interaction is direct. Interacts with p53/TP53. Interacts with YBX1. Interacts with AKT2. Post-translationally, phosphorylation at Ser-68 by PKB/AKT2 in response to oxidative stress induces translocation to the nucleus and negatively regulates myoblast differentiation. In terms of tissue distribution, expressed by myoblasts (at protein level). Expressed in skeletal and cardiac muscles.

It is found in the cytoplasm. The protein localises to the myofibril. Its subcellular location is the sarcomere. It localises to the i band. The protein resides in the cytosol. It is found in the nucleus. The protein localises to the PML body. Functions as a negative regulator of myocyte differentiation. May interact with both sarcoplasmic structural proteins and nuclear proteins to regulate gene expression during muscle development and in response to muscle stress. This chain is Ankyrin repeat domain-containing protein 2 (Ankrd2), found in Mus musculus (Mouse).